Here is a 151-residue protein sequence, read N- to C-terminus: Apolipoprotein A-I (151 aa).

An N-terminal signal peptide occupies residues 1-18 (MKAVVLTLAVLFLTGSQA). Positions 19–24 (RHFWQQ) are excised as a propeptide. Tandem repeats lie at residues 67 to 88 (LKLL…EQIG) and 89 to 110 (PVTQ…QEMS). The interval 67-143 (LKLLDNWDTL…EVELYRQKVA (77 aa)) is 4 X approximate tandem repeats. Residue Met-109 is modified to Methionine sulfoxide. The 3; half-length repeat unit spans residues 111-121 (KDLEEVKQKVQ). The stretch at 122–143 (PYLDDFQKKWQEEVELYRQKVA) is repeat 4.

The protein belongs to the apolipoprotein A1/A4/E family. In terms of assembly, homodimer. Interacts with APOA1BP and CLU. Component of a sperm activating protein complex (SPAP), consisting of APOA1, an immunoglobulin heavy chain, an immunoglobulin light chain and albumin. Interacts with NDRG1. Interacts with SCGB3A2. Interacts with NAXE and YJEFN3. Glycosylated. Post-translationally, palmitoylated. In terms of processing, phosphorylation sites are present in the extracellular medium. As to expression, major protein of plasma HDL, also found in chylomicrons.

The protein localises to the secreted. In terms of biological role, participates in the reverse transport of cholesterol from tissues to the liver for excretion by promoting cholesterol efflux from tissues and by acting as a cofactor for the lecithin cholesterol acyltransferase (LCAT). As part of the SPAP complex, activates spermatozoa motility. In Panthera tigris altaica (Siberian tiger), this protein is Apolipoprotein A-I (APOA1).